The chain runs to 302 residues: Pantothenate synthetase (302 aa).

An ATP-binding site is contributed by 30-37 (MGALHGGH). The active-site Proton donor is the His-37. Gln-61 contributes to the (R)-pantoate binding site. Gln-61 contributes to the beta-alanine binding site. 147-150 (GEKD) serves as a coordination point for ATP. (R)-pantoate is bound at residue Gln-153. ATP is bound by residues Val-176 and 184 to 187 (KSSR).

It belongs to the pantothenate synthetase family. As to quaternary structure, homodimer.

The protein localises to the cytoplasm. The enzyme catalyses (R)-pantoate + beta-alanine + ATP = (R)-pantothenate + AMP + diphosphate + H(+). It functions in the pathway cofactor biosynthesis; (R)-pantothenate biosynthesis; (R)-pantothenate from (R)-pantoate and beta-alanine: step 1/1. In terms of biological role, catalyzes the condensation of pantoate with beta-alanine in an ATP-dependent reaction via a pantoyl-adenylate intermediate. This is Pantothenate synthetase from Shouchella clausii (strain KSM-K16) (Alkalihalobacillus clausii).